The primary structure comprises 273 residues: Aquaporin NIP1-4 (273 aa).

2 helical membrane-spanning segments follow: residues Leu-59 to Val-79 and Val-86 to Val-106. An NPA 1 motif is present at residues Asn-115–Ala-117. 3 helical membrane passes run Ala-133 to Phe-155, Ser-174 to Thr-194, and Ala-198 to Ala-218. Residues Asn-227–Ala-229 carry the NPA 2 motif. Residues Trp-245 to Ile-265 traverse the membrane as a helical segment.

This sequence belongs to the MIP/aquaporin (TC 1.A.8) family. NIP (TC 1.A.8.12) subfamily. As to expression, expressed in leaves.

The protein resides in the membrane. Aquaporins facilitate the transport of water and small neutral solutes across cell membranes. This is Aquaporin NIP1-4 (NIP1-4) from Oryza sativa subsp. japonica (Rice).